The following is a 468-amino-acid chain: MNPSSSPSQSTANVKFVLLISGVAALGGFLFGFDTAVINGAVAALQKHFQTDSLLTGLSVSLALLGSALGAFGAGPIADRHGRIKTMILAAVLFTLSSIGSGLPFTIWDFIFWRVLGGIGVGAASVIAPAYIAEVSPAHLRGRLGSLQQLAIVSGIFIALLSNWFIALMAGGSAQNPWLFGAAAWRWMFWTELIPALLYGVCAFLIPESPRYLVAQGQGEKAAAILWKVEGGDVPSRIEEIQATVSLDHKPRFSDLLSRRGGLLPIVWIGMGLSALQQFVGINVIFYYSSVLWRSVGFTEEKSLLITVITGFINILTTLVAIAFVDKFGRKPLLLMGSIGMTITLGILSVVFGGATVVNGQPTLTGAAGIIALVTANLYVFSFGFSWGPIVWVLLGEMFNNKIRAAALSVAAGVQWIANFIISTTFPPLLDTVGLGPAYGLYATSAAISIFFIWFFVKETKGKTLEQM.

Residues 1–17 are Cytoplasmic-facing; that stretch reads MNPSSSPSQSTANVKFV. A helical membrane pass occupies residues 18-38; that stretch reads LLISGVAALGGFLFGFDTAVI. Topologically, residues 39–58 are extracellular; sequence NGAVAALQKHFQTDSLLTGL. The chain crosses the membrane as a helical span at residues 59-78; sequence SVSLALLGSALGAFGAGPIA. The Cytoplasmic portion of the chain corresponds to 79–84; the sequence is DRHGRI. A helical transmembrane segment spans residues 85 to 105; the sequence is KTMILAAVLFTLSSIGSGLPF. Topologically, residues 106–114 are extracellular; sequence TIWDFIFWR. A helical membrane pass occupies residues 115–135; that stretch reads VLGGIGVGAASVIAPAYIAEV. Residues 136–149 lie on the Cytoplasmic side of the membrane; that stretch reads SPAHLRGRLGSLQQ. The helical transmembrane segment at 150–170 threads the bilayer; sequence LAIVSGIFIALLSNWFIALMA. Topologically, residues 171 to 186 are extracellular; it reads GGSAQNPWLFGAAAWR. The chain crosses the membrane as a helical span at residues 187 to 207; it reads WMFWTELIPALLYGVCAFLIP. Residues 208–265 lie on the Cytoplasmic side of the membrane; that stretch reads ESPRYLVAQGQGEKAAAILWKVEGGDVPSRIEEIQATVSLDHKPRFSDLLSRRGGLLP. Residues 266 to 286 form a helical membrane-spanning segment; the sequence is IVWIGMGLSALQQFVGINVIF. Residues 287 to 307 lie on the Extracellular side of the membrane; the sequence is YYSSVLWRSVGFTEEKSLLIT. The helical transmembrane segment at 308-328 threads the bilayer; it reads VITGFINILTTLVAIAFVDKF. The Cytoplasmic portion of the chain corresponds to 329–331; it reads GRK. Residues 332 to 352 form a helical membrane-spanning segment; sequence PLLLMGSIGMTITLGILSVVF. The Extracellular segment spans residues 353–366; it reads GGATVVNGQPTLTG. Residues 367-387 traverse the membrane as a helical segment; the sequence is AAGIIALVTANLYVFSFGFSW. Topologically, residues 388–412 are cytoplasmic; that stretch reads GPIVWVLLGEMFNNKIRAAALSVAA. A helical transmembrane segment spans residues 413 to 433; that stretch reads GVQWIANFIISTTFPPLLDTV. The Extracellular segment spans residues 434–436; sequence GLG. A helical membrane pass occupies residues 437 to 457; the sequence is PAYGLYATSAAISIFFIWFFV. The Cytoplasmic segment spans residues 458–468; that stretch reads KETKGKTLEQM.

The protein belongs to the major facilitator superfamily. Sugar transporter (TC 2.A.1.1) family.

Its subcellular location is the cell membrane. The sequence is that of Glucose transport protein (gtr) from Synechocystis sp. (strain ATCC 27184 / PCC 6803 / Kazusa).